A 179-amino-acid polypeptide reads, in one-letter code: Sperm surface protein Sp17 (179 aa).

Positions 72-109 (HAFKDEPPEKSETQKIQPEKVAIEKETMPQETVKEKET) are enriched in basic and acidic residues. Disordered stretches follow at residues 72–138 (HAFK…EGLL) and 159–179 (TRKEYLKKRDSTDETADENNE). Acidic residues predominate over residues 116 to 135 (EPTEEPQKEEEEEEDEEDLE). The region spanning 143–172 (MQDAAVKIQAVFRGHKTRKEYLKKRDSTDE) is the IQ domain. Basic and acidic residues predominate over residues 161-170 (KEYLKKRDST).

Homodimer. May interact with ROPN1. In terms of tissue distribution, testis- and sperm-specific.

Its subcellular location is the membrane. Functionally, sperm surface zona pellucida binding protein. Helps to bind spermatozoa to the zona pellucida with high affinity. Might function in binding zona pellucida and carbohydrates. The polypeptide is Sperm surface protein Sp17 (SPA17) (Monodelphis domestica (Gray short-tailed opossum)).